The following is a 361-amino-acid chain: Chorismate synthase (361 aa).

Residues 37–59 form a disordered region; it reads TEADLQHDLDRRRPGTSRYTTQR. The segment covering 40–49 has biased composition (basic and acidic residues); it reads DLQHDLDRRR. Positions 48 and 54 each coordinate NADP(+). Residues 125-127, 238-239, G278, 293-297, and R319 contribute to the FMN site; these read RSS, NA, and KPTSS.

Belongs to the chorismate synthase family. In terms of assembly, homotetramer. FMNH2 serves as cofactor.

The enzyme catalyses 5-O-(1-carboxyvinyl)-3-phosphoshikimate = chorismate + phosphate. It functions in the pathway metabolic intermediate biosynthesis; chorismate biosynthesis; chorismate from D-erythrose 4-phosphate and phosphoenolpyruvate: step 7/7. In terms of biological role, catalyzes the anti-1,4-elimination of the C-3 phosphate and the C-6 proR hydrogen from 5-enolpyruvylshikimate-3-phosphate (EPSP) to yield chorismate, which is the branch point compound that serves as the starting substrate for the three terminal pathways of aromatic amino acid biosynthesis. This reaction introduces a second double bond into the aromatic ring system. This chain is Chorismate synthase, found in Serratia proteamaculans (strain 568).